The sequence spans 332 residues: Stage II sporulation protein B (332 aa).

Residues 1-10 are compositionally biased toward basic residues; that stretch reads MKKRKNKKNS. The disordered stretch occupies residues 1 to 71; that stretch reads MKKRKNKKNS…EHPDEDEFNW (71 aa). Over residues 11 to 27 the composition is skewed to basic and acidic residues; the sequence is KAAEKALKVTINGKEET. The chain crosses the membrane as a helical span at residues 112–132; sequence AATIAFAAVIGTGLGLFALNI. A disordered region spans residues 139–174; it reads SAPASLEDSLGSQTAKAGDTSADKQTSGAEKQAAQT. The segment covering 161–174 has biased composition (polar residues); that stretch reads DKQTSGAEKQAAQT. Residues 175 to 250 form the SPOR domain; it reads EGTYKTYAVQ…SDFEAWGGKE (76 aa).

It localises to the cell membrane. Its activity is regulated as follows. Appears to be degraded early in engulfment, in correlation with its loss from polar septa. Functionally, facilitates the rapid and spatially regulated dissolution of septal peptidoglycan. The protein is Stage II sporulation protein B of Bacillus subtilis (strain 168).